The primary structure comprises 161 residues: Nucleotide-binding protein NE2248 (161 aa).

Belongs to the YajQ family.

Functionally, nucleotide-binding protein. This chain is Nucleotide-binding protein NE2248, found in Nitrosomonas europaea (strain ATCC 19718 / CIP 103999 / KCTC 2705 / NBRC 14298).